The chain runs to 1248 residues: Reverse gyrase 1 (1248 aa).

An RG N-terminal-type zinc finger spans residues 7-44; the sequence is IPPSIYLFSCPNCGRSISTYRLLLGSVCNICLEEDKEY. Positions 16, 19, 34, and 37 each coordinate Zn(2+). ATP-binding positions include Gln92 and 109-116; that span reads APPGLGKT. The 167-residue stretch at 96-262 folds into the Helicase ATP-binding domain; sequence IYRLLSGESF…KKYRENTQKN (167 aa). Residues 219 to 222 carry the DEAD box motif; that stretch reads DDVD. The interval 621-1248 is topoisomerase I; it reads QKVKTVLLVV…QVYEEINEIR (628 aa). The region spanning 625–789 is the Toprim domain; it reads TVLLVVESPN…NIRRAEFHEV (165 aa). Glu631 serves as a coordination point for Mg(2+). Residues 706-735 form an RG C-terminal-type; atypical zinc finger; it reads IKKCENNHQFTDFFESNKCPRCMTTKVRYD. Zn(2+)-binding residues include Cys709, His713, Cys724, and Cys727. Residue Asp758 participates in Mg(2+) binding. The region spanning 805 to 1248 is the Topo IA-type catalytic domain; the sequence is NVNLVKSQLV…QVYEEINEIR (444 aa). The active-site O-(5'-phospho-DNA)-tyrosine intermediate is the Tyr965.

It in the N-terminal section; belongs to the DEAD box helicase family. DDVD subfamily. The protein in the C-terminal section; belongs to the type IA topoisomerase family. Monomer. Zn(2+) serves as cofactor. The cofactor is Mg(2+). In terms of processing, the N-terminus is blocked.

It is found in the cytoplasm. The catalysed reaction is ATP + H2O = ADP + phosphate + H(+). Modifies the topological state of DNA by introducing positive supercoils in an ATP-dependent process. Increases the linking number in steps of +1. Has a DNA-stimulated ATPase activity; closed circular ssDNA stimulates ATPase much better than dsDNA although negative supercoiled, positive supercoiled and relaxed dsDNA all stimulate ATPase activity. All NTPs permit topoisomerization (relaxation) of negatively supercoiled dsDNA without nucleotide hydrolysis. It transiently cleaves a single DNA strand and remains covalently bound to the 5' DNA end. Acts via a tyrosine residue. Reverse gyrase binds and unwinds DNA independently of ATP binding and DNA cleavage. May be involved in rewinding the DNA strands in the regions of the chromosome that have opened up to allow transcription or replication, probably acts via ssDNA regions of the chromosome. This is Reverse gyrase 1 from Sulfolobus acidocaldarius (strain ATCC 33909 / DSM 639 / JCM 8929 / NBRC 15157 / NCIMB 11770).